Consider the following 408-residue polypeptide: Dihydrolipoyllysine-residue acetyltransferase component of pyruvate dehydrogenase complex (408 aa).

Residues 2–78 (PIKILMPALS…PVNSLIAVLS (77 aa)) form the Lipoyl-binding domain. The residue at position 43 (lysine 43) is an N6-lipoyllysine. The region spanning 128-165 (FASPLAKRLAKIGDIRLENVQGSGPHGRIVKQDILSYD) is the Peripheral subunit-binding (PSBD) domain. The active site involves histidine 381.

It belongs to the 2-oxoacid dehydrogenase family. Forms a 24-polypeptide structural core with octahedral symmetry. (R)-lipoate is required as a cofactor.

It catalyses the reaction N(6)-[(R)-dihydrolipoyl]-L-lysyl-[protein] + acetyl-CoA = N(6)-[(R)-S(8)-acetyldihydrolipoyl]-L-lysyl-[protein] + CoA. In terms of biological role, the pyruvate dehydrogenase complex catalyzes the overall conversion of pyruvate to acetyl-CoA and CO(2). It contains multiple copies of three enzymatic components: pyruvate dehydrogenase (E1), dihydrolipoamide acetyltransferase (E2) and lipoamide dehydrogenase (E3). This chain is Dihydrolipoyllysine-residue acetyltransferase component of pyruvate dehydrogenase complex (pdhC), found in Rickettsia prowazekii (strain Madrid E).